The chain runs to 101 residues: Large ribosomal subunit protein uL24 (101 aa).

The protein belongs to the universal ribosomal protein uL24 family. Part of the 50S ribosomal subunit.

One of two assembly initiator proteins, it binds directly to the 5'-end of the 23S rRNA, where it nucleates assembly of the 50S subunit. In terms of biological role, one of the proteins that surrounds the polypeptide exit tunnel on the outside of the subunit. In Borreliella afzelii (strain PKo) (Borrelia afzelii), this protein is Large ribosomal subunit protein uL24.